The primary structure comprises 92 residues: Small ribosomal subunit protein uS19c (92 aa).

This sequence belongs to the universal ribosomal protein uS19 family.

Its subcellular location is the plastid. In terms of biological role, protein S19 forms a complex with S13 that binds strongly to the 16S ribosomal RNA. The sequence is that of Small ribosomal subunit protein uS19c from Cuscuta exaltata (Tall dodder).